The primary structure comprises 314 residues: MIEIEKPNIETVEVSEDAKYGKFVVEPLERGYGTTLGNSLRRILLSSLPGAAVTSVQIDGVLHEFSTIEGVVEDVTTIILNLKKLALKIYSDEEKTLEIDVQGEGNVTAGDLTHDSDVEVLNPDLHIATLTKGASFRMRLQAKRGRGYVLAEGNKNDDQPIGVLPIDSIYTPVARVNYQVENTRVGQVTNYDKLTLDVWTDGSTRPEEAVSLGVKILTEHLNIFVGLTDQAQNAEIMVEKEEDQKEKVLEMTIEELDLSVRSYNCLKRAGINTVQELTHKTEEDMMKVRNLGRKSLEEVQEKLGELGLGLRNEE.

Residues 1-228 (MIEIEKPNIE…EHLNIFVGLT (228 aa)) are alpha N-terminal domain (alpha-NTD). An alpha C-terminal domain (alpha-CTD) region spans residues 245–314 (KEKVLEMTIE…ELGLGLRNEE (70 aa)).

This sequence belongs to the RNA polymerase alpha chain family. Homodimer. The RNAP catalytic core consists of 2 alpha, 1 beta, 1 beta' and 1 omega subunit. When a sigma factor is associated with the core the holoenzyme is formed, which can initiate transcription.

The enzyme catalyses RNA(n) + a ribonucleoside 5'-triphosphate = RNA(n+1) + diphosphate. DNA-dependent RNA polymerase catalyzes the transcription of DNA into RNA using the four ribonucleoside triphosphates as substrates. The chain is DNA-directed RNA polymerase subunit alpha from Shouchella clausii (strain KSM-K16) (Alkalihalobacillus clausii).